The primary structure comprises 127 residues: MSSNDSLQRLAQIIESRKPANGGDPGTSYVARLLHRGPDAFLKKIGEEATETVMAAKDLDHGGPTPELRAKLVGEVADLWFHSLIALAHYGLQPADVIAELERREGTSGIEEKALRKVQNRDAAEKS.

This sequence belongs to the PRA-PH family.

Its subcellular location is the cytoplasm. It carries out the reaction 1-(5-phospho-beta-D-ribosyl)-ATP + H2O = 1-(5-phospho-beta-D-ribosyl)-5'-AMP + diphosphate + H(+). It functions in the pathway amino-acid biosynthesis; L-histidine biosynthesis; L-histidine from 5-phospho-alpha-D-ribose 1-diphosphate: step 2/9. The sequence is that of Phosphoribosyl-ATP pyrophosphatase from Polaromonas sp. (strain JS666 / ATCC BAA-500).